We begin with the raw amino-acid sequence, 234 residues long: UPF0502 protein BPSS1373 (234 aa).

The protein belongs to the UPF0502 family.

This Burkholderia pseudomallei (strain K96243) protein is UPF0502 protein BPSS1373.